The chain runs to 493 residues: Transcript termination protein A18 (493 aa).

A Helicase ATP-binding domain is found at 100–256 (MIESKRPLYI…NSIINIAKLS (157 aa)). 113–120 (LACGFGKT) is an ATP binding site. The DESH box motif lies at 206-209 (DESH).

Belongs to the helicase family. Poxviruses subfamily. In terms of assembly, interacts with G2. Might be part of a transcription complex composed at least of G2, A18, and H5.

It is found in the virion. Functionally, DNA helicase which seems to act as a postreplicative transcription termination factor. Involved in ATP-dependent release of nascent RNA. Forms a stable complex with single-stranded DNA, and to a lesser extent RNA. The chain is Transcript termination protein A18 from Rabbitpox virus (strain Utrecht) (RPV).